The chain runs to 148 residues: Lysozyme C (148 aa).

The signal sequence occupies residues 1 to 18 (MKAVIILGLVLLSVTVQG). Positions 19 to 148 (KIFERCELAR…VSQYVQGCGV (130 aa)) constitute a C-type lysozyme domain. Intrachain disulfides connect Cys-24-Cys-146, Cys-48-Cys-134, Cys-83-Cys-99, and Cys-95-Cys-113. Residues Glu-53 and Asp-71 contribute to the active site.

The protein belongs to the glycosyl hydrolase 22 family. As to quaternary structure, monomer.

Its subcellular location is the secreted. It carries out the reaction Hydrolysis of (1-&gt;4)-beta-linkages between N-acetylmuramic acid and N-acetyl-D-glucosamine residues in a peptidoglycan and between N-acetyl-D-glucosamine residues in chitodextrins.. Functionally, lysozymes have primarily a bacteriolytic function; those in tissues and body fluids are associated with the monocyte-macrophage system and enhance the activity of immunoagents. The polypeptide is Lysozyme C (LYZ) (Macaca mulatta (Rhesus macaque)).